Here is a 98-residue protein sequence, read N- to C-terminus: NADH-ubiquinone oxidoreductase chain 4L (98 aa).

3 consecutive transmembrane segments (helical) span residues 1 to 21 (MSLV…GLLM), 29 to 49 (ALLC…LTIL), and 61 to 81 (IILL…LVMI).

It belongs to the complex I subunit 4L family. Core subunit of respiratory chain NADH dehydrogenase (Complex I) which is composed of 45 different subunits.

Its subcellular location is the mitochondrion inner membrane. The enzyme catalyses a ubiquinone + NADH + 5 H(+)(in) = a ubiquinol + NAD(+) + 4 H(+)(out). In terms of biological role, core subunit of the mitochondrial membrane respiratory chain NADH dehydrogenase (Complex I) which catalyzes electron transfer from NADH through the respiratory chain, using ubiquinone as an electron acceptor. Part of the enzyme membrane arm which is embedded in the lipid bilayer and involved in proton translocation. The protein is NADH-ubiquinone oxidoreductase chain 4L (MT-ND4L) of Delphinapterus leucas (Beluga whale).